An 86-amino-acid chain; its full sequence is uncharacterized protein (86 aa).

The chain crosses the membrane as a helical span at residues 4–24; it reads LFFTLIAFVAIILLMSIGFII.

The protein resides in the membrane. This is an uncharacterized protein from Haemophilus influenzae (strain ATCC 51907 / DSM 11121 / KW20 / Rd).